Reading from the N-terminus, the 99-residue chain is Large ribosomal subunit protein bL21 (99 aa).

Belongs to the bacterial ribosomal protein bL21 family. As to quaternary structure, part of the 50S ribosomal subunit. Contacts protein L20.

Functionally, this protein binds to 23S rRNA in the presence of protein L20. The protein is Large ribosomal subunit protein bL21 of Mesomycoplasma hyopneumoniae (strain 7448) (Mycoplasma hyopneumoniae).